Consider the following 398-residue polypeptide: Arylacetamide deacetylase (398 aa).

Topologically, residues 1–5 (MGKTI) are cytoplasmic. The helical; Signal-anchor for type II membrane protein transmembrane segment at 6–26 (SLLISVVLVAYYLYIPLPDAI) threads the bilayer. Topologically, residues 27–398 (EEPWKVVWET…QYLSWLIKNL (372 aa)) are lumenal. Positions 110-112 (HGG) match the Involved in the stabilization of the negatively charged intermediate by the formation of the oxyanion hole motif. Residues C115 and C339 are joined by a disulfide bond. S188 is an active-site residue. N-linked (GlcNAc...) asparagine glycosylation is present at N281. Active-site residues include D342 and H372.

The protein belongs to the 'GDXG' lipolytic enzyme family. In terms of processing, N-glycosylated. In terms of tissue distribution, highest levels in liver with lower levels in jejunum and kidney.

It is found in the endoplasmic reticulum membrane. Its subcellular location is the microsome membrane. It carries out the reaction a triacylglycerol + H2O = a diacylglycerol + a fatty acid + H(+). Its function is as follows. Displays cellular triglyceride lipase activity in liver, increases the levels of intracellular fatty acids derived from the hydrolysis of newly formed triglyceride stores and plays a role in very low-density lipoprotein assembly. Displays serine esterase activity in liver. Deacetylates a variety of arylacetamide substrates, including xenobiotic compounds and procarcinogens, converting them to the primary arylamide compounds and increasing their toxicity. The polypeptide is Arylacetamide deacetylase (Aadac) (Mus musculus (Mouse)).